The chain runs to 1125 residues: Probable phospholipid-transporting ATPase IIB (1125 aa).

Residues 1–131 (MADGIPLNPV…IKNQKYNIVT (131 aa)) lie on the Cytoplasmic side of the membrane. The helical transmembrane segment at 132 to 152 (FVPGVLYQQFKFFLNLYFLVV) threads the bilayer. Residues 153 to 161 (ACSQFVPSL) lie on the Extracellular side of the membrane. The helical transmembrane segment at 162–182 (KIGYLYTYWAPLGFVLAVTMV) threads the bilayer. Residues 183-369 (REAVDEVRRC…LDLELNRLTK (187 aa)) are Cytoplasmic-facing. The helical transmembrane segment at 370–390 (ALFLAQVVLSVVMVALQGFLG) threads the bilayer. Residues 391-395 (PWFRN) lie on the Extracellular side of the membrane. Residues 396–415 (LFRFVVLFSYIIPISLRVNL) traverse the membrane as a helical segment. Topologically, residues 416–928 (DMGKSAYGWM…ALGQFVMHRG (513 aa)) are cytoplasmic. D455 functions as the 4-aspartylphosphate intermediate in the catalytic mechanism. 3 residues coordinate ATP: D455, K456, and T457. D455 is a Mg(2+) binding site. T457 contributes to the Mg(2+) binding site. Positions 500-511 (QSNGSSASSTPS) are enriched in low complexity. Disordered stretches follow at residues 500 to 525 (QSNG…RKSV) and 552 to 574 (GANA…RTYQ). A compositionally biased stretch (acidic residues) spans 558-567 (ESTEADQDFS). Residues E580, F622, K627, K646, R675, T676, T755, G756, D757, R837, and K843 each contribute to the ATP site. Mg(2+) is bound at residue D863. 2 residues coordinate ATP: N866 and D867. D867 is a binding site for Mg(2+). The chain crosses the membrane as a helical span at residues 929–949 (MIISTMQAVFSSIFYFASVPL). The Extracellular segment spans residues 950–951 (YQ). Residues 952–972 (GFLMVGYATIYTMFPVFSLVL) traverse the membrane as a helical segment. The Cytoplasmic portion of the chain corresponds to 973 to 1001 (DQDVKPEMALLYPELYKDLTKGRSLSFKT). The chain crosses the membrane as a helical span at residues 1002–1022 (FLIWVLISIYQGGILMYGALV). At 1023–1030 (LFDQEFVH) the chain is on the extracellular side. The chain crosses the membrane as a helical span at residues 1031–1051 (VVAISFTALILTELLMVALTI). Residues 1052–1055 (RTWH) lie on the Cytoplasmic side of the membrane. The helical transmembrane segment at 1056–1076 (WLMVVAQLISLACYLASLAFL) threads the bilayer. Residues 1077 to 1088 (NEYFDLSFITTR) lie on the Extracellular side of the membrane. The chain crosses the membrane as a helical span at residues 1089–1109 (VFLWKVCVITLVSCLPLYIIK). Residues 1110–1125 (YLKRKFSPPSYSKLSS) lie on the Cytoplasmic side of the membrane.

This sequence belongs to the cation transport ATPase (P-type) (TC 3.A.3) family. Type IV subfamily. The cofactor is Mg(2+).

It is found in the golgi apparatus. Its subcellular location is the trans-Golgi network membrane. The enzyme catalyses ATP + H2O + phospholipidSide 1 = ADP + phosphate + phospholipidSide 2.. The polypeptide is Probable phospholipid-transporting ATPase IIB (atp9b) (Danio rerio (Zebrafish)).